We begin with the raw amino-acid sequence, 428 residues long: Enolase (428 aa).

Residue Gln163 participates in (2R)-2-phosphoglycerate binding. Residue Glu205 is the Proton donor of the active site. Residues Asp243, Glu286, and Asp313 each contribute to the Mg(2+) site. Residues Lys338, Arg367, Ser368, and Lys389 each contribute to the (2R)-2-phosphoglycerate site. Lys338 serves as the catalytic Proton acceptor.

Belongs to the enolase family. Mg(2+) is required as a cofactor.

The protein resides in the cytoplasm. Its subcellular location is the secreted. It is found in the cell surface. The enzyme catalyses (2R)-2-phosphoglycerate = phosphoenolpyruvate + H2O. It functions in the pathway carbohydrate degradation; glycolysis; pyruvate from D-glyceraldehyde 3-phosphate: step 4/5. In terms of biological role, catalyzes the reversible conversion of 2-phosphoglycerate (2-PG) into phosphoenolpyruvate (PEP). It is essential for the degradation of carbohydrates via glycolysis. In Polaromonas naphthalenivorans (strain CJ2), this protein is Enolase.